A 715-amino-acid chain; its full sequence is Macrolide export ATP-binding/permease protein MacB (715 aa).

Residues 4–245 form the ABC transporter domain; the sequence is IELQDIRKTY…VSKAAPAQSK (242 aa). 40–47 is a binding site for ATP; the sequence is GTSGSGKT. The tract at residues 229-251 is disordered; the sequence is AVGDMPQVSKAAPAQSKPVHSAM. 4 helical membrane passes run 277–297, 592–612, 639–659, and 681–701; these read AALT…MMEI, LLLA…MNIM, QFLF…ILVG, and ILAA…YPAW.

Belongs to the ABC transporter superfamily. Macrolide exporter (TC 3.A.1.122) family. As to quaternary structure, homodimer.

The protein localises to the cell inner membrane. Non-canonical ABC transporter that contains transmembrane domains (TMD), which form a pore in the inner membrane, and an ATP-binding domain (NBD), which is responsible for energy generation. Confers resistance against macrolides. This Syntrophobacter fumaroxidans (strain DSM 10017 / MPOB) protein is Macrolide export ATP-binding/permease protein MacB.